The sequence spans 86 residues: Small ribosomal subunit protein bS16 (86 aa).

Belongs to the bacterial ribosomal protein bS16 family.

In Syntrophotalea carbinolica (strain DSM 2380 / NBRC 103641 / GraBd1) (Pelobacter carbinolicus), this protein is Small ribosomal subunit protein bS16.